A 388-amino-acid chain; its full sequence is Diacylglycerol O-acyltransferase 2 (388 aa).

The Cytoplasmic segment spans residues 1 to 69 (MKTLIAAYSG…NRSKVEKQLQ (69 aa)). Residues 70-88 (VISVLQWVLSFLVLGVACS) form a helical membrane-spanning segment. Residues 89-92 (VILM) lie on the Lumenal side of the membrane. A helical transmembrane segment spans residues 93 to 112 (YTFCTDCWLIAVLYFTWLAF). At 113–388 (DWNTPKKGGR…LPETEVLEVN (276 aa)) the chain is on the cytoplasmic side.

The protein belongs to the diacylglycerol acyltransferase family. Forms multimeric complexes consisting of several DGAT2 subunits. Interacts with SLC27A1 and this interaction is enhanced in the presence of ZFYVE1. As to expression, predominantly expressed in liver. Also expressed in testis.

The protein resides in the endoplasmic reticulum membrane. It is found in the lipid droplet. It localises to the cytoplasm. The protein localises to the perinuclear region. The catalysed reaction is an acyl-CoA + a 1,2-diacyl-sn-glycerol = a triacyl-sn-glycerol + CoA. It carries out the reaction all-trans-retinol + an acyl-CoA = an all-trans-retinyl ester + CoA. It catalyses the reaction 1,2-di-(9Z-octadecenoyl)-sn-glycerol + hexadecanoyl-CoA = 1,2-di-(9Z)-octadecenoyl-3-hexadecanoyl-sn-glycerol + CoA. The enzyme catalyses 1,2-di-(9Z-octadecenoyl)-sn-glycerol + (9Z)-octadecenoyl-CoA = 1,2,3-tri-(9Z-octadecenoyl)-glycerol + CoA. The catalysed reaction is 1,3-di-(9Z-octadecenoyl)-glycerol + (9Z)-octadecenoyl-CoA = 1,2,3-tri-(9Z-octadecenoyl)-glycerol + CoA. It carries out the reaction 2,3-di-(9Z)-octadecenoyl-sn-glycerol + (9Z)-octadecenoyl-CoA = 1,2,3-tri-(9Z-octadecenoyl)-glycerol + CoA. It catalyses the reaction 2-(9Z-octadecenoyl)-glycerol + hexadecanoyl-CoA = 1-hexadecanoyl-2-(9Z-octadecenoyl)-sn-glycerol + CoA. The enzyme catalyses 2-(9Z-octadecenoyl)-glycerol + (9Z)-octadecenoyl-CoA = 1,2-di-(9Z-octadecenoyl)-sn-glycerol + CoA. The catalysed reaction is all-trans-retinol + hexadecanoyl-CoA = all-trans-retinyl hexadecanoate + CoA. It carries out the reaction 1-O-(9Z-octadecenyl)-glycerol + (9Z)-octadecenoyl-CoA = 1-O-(9Z-octadecyl)-3-(9Z-octadecenoyl)-glycerol + CoA. It catalyses the reaction 1-(9Z-octadecenoyl)-glycerol + (9Z)-octadecenoyl-CoA = 1,2-di-(9Z-octadecenoyl)-glycerol + CoA. It functions in the pathway glycerolipid metabolism; triacylglycerol biosynthesis. With respect to regulation, inhibited by niacin. Its function is as follows. Essential acyltransferase that catalyzes the terminal and only committed step in triacylglycerol synthesis by using diacylglycerol and fatty acyl CoA as substrates. Required for synthesis and storage of intracellular triglycerides. Probably plays a central role in cytosolic lipid accumulation. In liver, is primarily responsible for incorporating endogenously synthesized fatty acids into triglycerides. Also functions as an acyl-CoA retinol acyltransferase (ARAT). Also able to use 1-monoalkylglycerol (1-MAkG) as an acyl acceptor for the synthesis of monoalkyl-monoacylglycerol (MAMAG). In Mus musculus (Mouse), this protein is Diacylglycerol O-acyltransferase 2.